The sequence spans 622 residues: Galactolipid galactosyltransferase SFR2, chloroplastic (622 aa).

Over 1–3 (MEL) the chain is Stromal. Residues 4–24 (FALLIKVAGLLATVTVGANVV) form a helical; Signal-anchor membrane-spanning segment. Over 25-622 (SYSRFRRQNL…LHPALASPFD (598 aa)) the chain is Cytoplasmic. Residues H222, 266-267 (NE), Y377, E429, W467, 474-475 (EW), and F483 contribute to the a beta-D-glucoside site. The Proton donor role is filled by E267. The active-site Nucleophile is the E429.

This sequence belongs to the glycosyl hydrolase 1 family. In terms of tissue distribution, expressed in hypocotyls, cotyledons, stems, leaves, pedicels, sepals, anthers and pistils. Limited expression in roots. Not detected in petals or filaments.

It localises to the plastid. Its subcellular location is the chloroplast. The protein localises to the chloroplast outer membrane. The enzyme catalyses 2 a 1,2-diacyl-3-O-(beta-D-galactosyl)-sn-glycerol = a 1,2-diacyl-3-O-[beta-D-galactosyl-(1-&gt;6)-beta-D-galactosyl]-sn-glycerol + a 1,2-diacyl-sn-glycerol. With respect to regulation, induced by MgCl(2). Its function is as follows. Glycosyl hydrolase family protein acting primarily as a highly specific galactosyltransferase. Synthesizes digalactosyldiacylglycerol from monogalactosyldiacylglycerol in the absence of UDP-galactose in vitro. Hydrolyzes o- and p-nitrophenyl beta-D-glucoside in vitro. Plays a role in freezing tolerance. May play a role in chloroplast protection. The polypeptide is Galactolipid galactosyltransferase SFR2, chloroplastic (Arabidopsis thaliana (Mouse-ear cress)).